We begin with the raw amino-acid sequence, 152 residues long: MGSFSITKGFFLFLAFWLPGHIGANPVYSAVSNTDLMDFKNLLDHLEEKMPVEDEVMPPQALSEQTDEAGAALSSLSEVPPWTGEVNPSQRDGGALGRGPWDPSDRSALLKSKLRALLAGPRSLRRSSCFGGRIDRIGAQSGLGCNSFRYRR.

Residues 1–24 (MGSFSITKGFFLFLAFWLPGHIGA) form the signal peptide. Propeptides lie at residues 25–122 (NPVY…AGPR) and 92–102 (DGGALGRGPWD). The disordered stretch occupies residues 54 to 104 (DEVMPPQALSEQTDEAGAALSSLSEVPPWTGEVNPSQRDGGALGRGPWDPS). Residue Ser128 is modified to Phosphoserine. Cys129 and Cys145 are disulfide-bonded. Residues 146–150 (NSFRY) are important for degradation of atrial natriuretic peptide by IDE.

The protein belongs to the natriuretic peptide family. As to quaternary structure, homodimer; disulfide-linked antiparallel dimer. Post-translationally, the precursor molecule is proteolytically cleaved by CORIN at Arg-122 to produce the atrial natriuretic peptide. Undergoes further proteolytic cleavage by unknown proteases to give rise to long-acting natriuretic peptide, vessel dilator and kaliuretic peptide. Additional processing gives rise to the auriculin and atriopeptin peptides. In the kidneys, alternative processing by an unknown protease results in the peptide urodilatin. Cleavage by MME initiates degradation of the factor and thereby regulates its activity. Degradation by IDE results in reduced activation of NPR1 (in vitro). During IDE degradation, the resulting products can temporarily stimulate NPR2 to produce cGMP, before the fragments are completely degraded and inactivated by IDE (in vitro). In terms of processing, degraded by IDE. Post-translationally, phosphorylation on Ser-128 decreases vasorelaxant activity. In terms of tissue distribution, high levels of expression in the atria compared to the ventricles. Very low levels of expression detected in extracardiac tissues such as the brain, hypothalamus, pituitary, lung and aorta. As to expression, atria (at protein level). High levels of expression in the atria with very low levels of expression in the ventricles (at protein level). Relatively low levels of expression detected in the brain compared to the atria (at protein level).

It is found in the secreted. It localises to the perikaryon. The protein localises to the cell projection. In terms of biological role, hormone that plays a key role in mediating cardio-renal homeostasis, and is involved in vascular remodeling and regulating energy metabolism. Acts by specifically binding and stimulating NPR1 to produce cGMP, which in turn activates effector proteins, such as PRKG1, that drive various biological responses. Regulates vasodilation, natriuresis, diuresis and aldosterone synthesis and is therefore essential for regulating blood pressure, controlling the extracellular fluid volume and maintaining the fluid-electrolyte balance. Also involved in inhibiting cardiac remodeling and cardiac hypertrophy by inducing cardiomyocyte apoptosis and attenuating the growth of cardiomyocytes and fibroblasts. Plays a role in female pregnancy by promoting trophoblast invasion and spiral artery remodeling in uterus, and thus prevents pregnancy-induced hypertension. In adipose tissue, acts in various cGMP- and PKG-dependent pathways to regulate lipid metabolism and energy homeostasis. This includes up-regulating lipid metabolism and mitochondrial oxygen utilization by activating the AMP-activated protein kinase (AMPK), and increasing energy expenditure by acting via MAPK11 to promote the UCP1-dependent thermogenesis of brown adipose tissue. Binds the clearance receptor NPR3 which removes the hormone from circulation. May have a role in cardio-renal homeostasis through regulation of natriuresis, diuresis, vasodilation, and inhibiting aldosterone synthesis. In vitro, promotes the production of cGMP and induces vasodilation. May promote natriuresis, at least in part, by enhancing prostaglandin E2 synthesis resulting in the inhibition of renal Na+-K+-ATPase. However reports on the involvement of this peptide in mammal blood volume and blood pressure homeostasis are conflicting; according to a report, in vivo it is not sufficient to activate cGMP and does not inhibit collecting duct transport nor effect diuresis and natriuresis. Appears to bind to specific receptors that are distinct from the receptors bound by atrial natriuretic peptide and vessel dilator. Possibly enhances protein excretion in urine by decreasing proximal tubular protein reabsorption. Functionally, may have a role in cardio-renal homeostasis through regulation of natriuresis, diuresis, and vasodilation. In vitro, promotes the production of cGMP and induces vasodilation. May promote natriuresis, at least in part, by enhancing prostaglandin E2 synthesis resulting in the inhibition of renal Na+-K+-ATPase. However reports on the involvement of this peptide in mammal blood volume and blood pressure homeostasis are conflicting; according to a report, in vivo it is not sufficient to activate cGMP and does not inhibit collecting duct transport nor effect diuresis and natriuresis. Appears to bind to specific receptors that are distinct from the receptors bound by the atrial natriuretic and long-acting natriuretic peptides. Possibly functions in protein excretion in urine by maintaining the integrity of the proximal tubules and enhancing protein excretion by decreasing proximal tubular protein reabsorption. Its function is as follows. May have a role in cardio-renal homeostasis through regulation of diuresis and inhibiting aldosterone synthesis. In vitro, promotes the production of cGMP and induces vasodilation. May promote natriuresis, at least in part, by enhancing prostaglandin E2 synthesis resulting in the inhibition of renal Na+-K+-ATPase. May have a role in potassium excretion but not sodium excretion (natriuresis). Possibly enhances protein excretion in urine by decreasing proximal tubular protein reabsorption. In terms of biological role, hormone produced in the kidneys that appears to be important for maintaining cardio-renal homeostasis. Mediates vasodilation, natriuresis and diuresis primarily in the renal system, in order to maintain the extracellular fluid volume and control the fluid-electrolyte balance. Specifically binds and stimulates cGMP production by renal transmembrane receptors, likely NPR1. Urodilatin not ANP, may be the natriuretic peptide responsible for the regulation of sodium and water homeostasis in the kidney. May have a role in cardio-renal homeostasis through regulation of natriuresis and vasodilation. In vivo promotes natriuresis and in vitro, vasodilates renal artery strips. Functionally, may have a role in cardio-renal homeostasis through regulation of regulation of natriuresis and vasodilation. In vivo promotes natriuresis. In vitro, vasodilates intestinal smooth muscle but not smooth muscle strips. Its function is as follows. May have a role in cardio-renal homeostasis through regulation of natriuresis and vasodilation. In vivo promotes natriuresis. In vitro, selectively vasodilates intestinal and vascular smooth muscle strips. In terms of biological role, may have a role in cardio-renal homeostasis through regulation of natriuresis and vasodilation. In vivo promotes natriuresis. In vitro, selectively vasodilates intestinal smooth muscle but not vascular smooth muscle strips. The chain is Natriuretic peptides A (Nppa) from Rattus norvegicus (Rat).